Here is a 288-residue protein sequence, read N- to C-terminus: Hydroxyethylthiazole kinase (288 aa).

Met55 serves as a coordination point for substrate. Residues Asn131 and Ser177 each coordinate ATP. Gly204 contributes to the substrate binding site.

This sequence belongs to the Thz kinase family. It depends on Mg(2+) as a cofactor.

It carries out the reaction 5-(2-hydroxyethyl)-4-methylthiazole + ATP = 4-methyl-5-(2-phosphooxyethyl)-thiazole + ADP + H(+). Its pathway is cofactor biosynthesis; thiamine diphosphate biosynthesis; 4-methyl-5-(2-phosphoethyl)-thiazole from 5-(2-hydroxyethyl)-4-methylthiazole: step 1/1. Its function is as follows. Catalyzes the phosphorylation of the hydroxyl group of 4-methyl-5-beta-hydroxyethylthiazole (THZ). The sequence is that of Hydroxyethylthiazole kinase from Haloquadratum walsbyi (strain DSM 16790 / HBSQ001).